Reading from the N-terminus, the 490-residue chain is Cytochrome P450 2C38 (490 aa).

A signal peptide spans methionine 1–tryptophan 20. Position 435 (cysteine 435) interacts with heme.

This sequence belongs to the cytochrome P450 family. The cofactor is heme. Liver, brain, kidney, and intestine, with trace amounts in lung and heart.

It is found in the endoplasmic reticulum membrane. The protein localises to the microsome membrane. It catalyses the reaction an organic molecule + reduced [NADPH--hemoprotein reductase] + O2 = an alcohol + oxidized [NADPH--hemoprotein reductase] + H2O + H(+). It carries out the reaction (5Z,8Z,11Z,14Z)-eicosatetraenoate + reduced [NADPH--hemoprotein reductase] + O2 = 11,12-epoxy-(5Z,8Z,14Z)-eicosatrienoate + oxidized [NADPH--hemoprotein reductase] + H2O + H(+). It participates in lipid metabolism; arachidonate metabolism. Its function is as follows. A cytochrome P450 monooxygenase that primarily catalyzes the epoxidation of 11,12 double bond of (5Z,8Z,11Z,14Z)-eicosatetraenoic acid (arachidonate) forming 11,12-epoxyeicosatrienoic acid (11,12-EET) regioisomer. Mechanistically, uses molecular oxygen inserting one oxygen atom into a substrate, and reducing the second into a water molecule, with two electrons provided by NADPH via cytochrome P450 reductase (CPR; NADPH--hemoprotein reductase). In Mus musculus (Mouse), this protein is Cytochrome P450 2C38.